Reading from the N-terminus, the 87-residue chain is uncharacterized protein (87 aa).

Helical transmembrane passes span 25–45 (LVAA…WLGG) and 53–73 (YAFL…LVTF).

It is found in the cell membrane. This is an uncharacterized protein from Paracoccus denitrificans.